Reading from the N-terminus, the 131-residue chain is MWSEFKSFAMRGNIMDLAIGVVIGGAFGKIVTSLVEDIIMPLVGLLLGGLDFSGLAVTFGDAHIKYGSFIQTIVNFFIISFSIFIVIRTIGKLRRKKEAEEEAEEAEETDQQTELLTEIRDLLKQRAPHND.

3 helical membrane passes run I14–L34, I38–T58, and G67–I87.

This sequence belongs to the MscL family. Homopentamer.

The protein resides in the cell membrane. In terms of biological role, channel that opens in response to stretch forces in the membrane lipid bilayer. May participate in the regulation of osmotic pressure changes within the cell. This chain is Large-conductance mechanosensitive channel, found in Bacillus velezensis (strain DSM 23117 / BGSC 10A6 / LMG 26770 / FZB42) (Bacillus amyloliquefaciens subsp. plantarum).